A 330-amino-acid polypeptide reads, in one-letter code: Zinc finger protein Gfi-1b (330 aa).

The segment at 1-20 (MPRSFLVKSKKAHTYHQPRV) is SNAG domain. Positions 1-42 (MPRSFLVKSKKAHTYHQPRVQEDEPLWPPALTPVPRDQAPSN) are disordered. Residue Lys8 is modified to N6,N6-dimethyllysine. The interaction with ARIH2 stretch occupies residues 91–330 (GDSPLSDSPP…RHRESQHNLK (240 aa)). C2H2-type zinc fingers lie at residues 163 to 186 (YHCV…RRSH), 192 to 214 (FACD…THVH), 220 to 242 (FECR…LLIH), 248 to 270 (YPCQ…TYIH), 276 to 298 (HKCQ…SRKH), and 304 to 327 (FSCE…ESQH). Residues 164-330 (HCVKCNKVFS…RHRESQHNLK (167 aa)) are mediates interaction with GATA1.

In terms of assembly, component of a RCOR-GFI-KDM1A-HDAC complex. Interacts directly with RCOR1, KDM1A and HDAC2. Forms a complex with GATA1. Interacts with histone methyltransferases EHMT2 and SUV39H1. Interacts with ARIH2 (via RING-type 2). Interacts with RUNX1T1. Methylation at Lys-8 in the SNAG domain seems required for the recruitment of the corepressor complex. Expressed in bone marrow and fetal liver, but also detectable in fetal spleen, fetal thymus, and testes. Detected in hematopoietic stem cells, erythroblasts, and megakaryocytes. Overexpressed in bone marrow of patients with erythroleukemia and megakaryocytic leukemia as well as in their corresponding leukemic cell lines, and markedly repressed in severe aplastic anemia (SAA).

The protein localises to the nucleus. In terms of biological role, essential proto-oncogenic transcriptional regulator necessary for development and differentiation of erythroid and megakaryocytic lineages. Component of a RCOR-GFI-KDM1A-HDAC complex that suppresses, via histone deacetylase (HDAC) recruitment, a number of genes implicated in multilineage blood cell development and controls hematopoietic differentiation. Transcriptional repressor or activator depending on both promoter and cell type context; represses promoter activity of SOCS1 and SOCS3 and thus, may regulate cytokine signaling pathways. Cooperates with GATA1 to repress target gene transcription, such as the apoptosis regulator BCL2L1; GFI1B silencing in leukemic cell lines markedly increase apoptosis rate. Inhibits down-regulation of MYC and MYB as well as the cyclin-dependent kinase inhibitor CDKN1A/P21WAF1 in IL6-treated myelomonocytic cells. Represses expression of GATA3 in T-cell lymphomas and inhibits GATA1-mediated transcription; as GATA1 also mediates erythroid GFI1B transcription, both GATA1 and GFI1B participate in a feedback regulatory pathway controlling the expression of GFI1B gene in erythroid cells. Suppresses GATA1-mediated stimulation of GFI1B promoter through protein interaction. Binds to gamma-satellite DNA and to its own promoter, auto-repressing its own expression. Alters histone methylation by recruiting histone methyltransferase to target genes promoters. Plays a role in heterochromatin formation. This chain is Zinc finger protein Gfi-1b (GFI1B), found in Homo sapiens (Human).